The following is a 98-amino-acid chain: Co-chaperonin GroES (98 aa).

Belongs to the GroES chaperonin family. Heptamer of 7 subunits arranged in a ring. Interacts with the chaperonin GroEL.

It is found in the cytoplasm. In terms of biological role, together with the chaperonin GroEL, plays an essential role in assisting protein folding. The GroEL-GroES system forms a nano-cage that allows encapsulation of the non-native substrate proteins and provides a physical environment optimized to promote and accelerate protein folding. GroES binds to the apical surface of the GroEL ring, thereby capping the opening of the GroEL channel. The protein is Co-chaperonin GroES of Bartonella bacilliformis (strain ATCC 35685 / KC583 / Herrer 020/F12,63).